A 250-amino-acid polypeptide reads, in one-letter code: Ribonuclease HII (250 aa).

An RNase H type-2 domain is found at 66–250 (QLVAGVDEVG…SFAPVSEYEK (185 aa)). Residues D72, E73, and D164 each contribute to the a divalent metal cation site.

The protein belongs to the RNase HII family. Mn(2+) serves as cofactor. Requires Mg(2+) as cofactor.

It is found in the cytoplasm. It carries out the reaction Endonucleolytic cleavage to 5'-phosphomonoester.. Functionally, endonuclease that specifically degrades the RNA of RNA-DNA hybrids. The polypeptide is Ribonuclease HII (Lactobacillus gasseri (strain ATCC 33323 / DSM 20243 / BCRC 14619 / CIP 102991 / JCM 1131 / KCTC 3163 / NCIMB 11718 / NCTC 13722 / AM63)).